A 394-amino-acid chain; its full sequence is Elongation factor Tu 2 (394 aa).

Residues 10-204 enclose the tr-type G domain; sequence KPHVNVGTIG…YLDSYIPEPE (195 aa). The segment at 19 to 26 is G1; the sequence is GHVDHGKT. 19–26 serves as a coordination point for GTP; it reads GHVDHGKT. Thr26 contributes to the Mg(2+) binding site. Positions 60-64 are G2; that stretch reads GITIN. A G3 region spans residues 81-84; sequence DCPG. Residues 81–85 and 136–139 each bind GTP; these read DCPGH and NKCD. Residues 136 to 139 are G4; that stretch reads NKCD. Residues 174 to 176 are G5; it reads SAL.

This sequence belongs to the TRAFAC class translation factor GTPase superfamily. Classic translation factor GTPase family. EF-Tu/EF-1A subfamily. Monomer.

The protein localises to the cytoplasm. The enzyme catalyses GTP + H2O = GDP + phosphate + H(+). Functionally, GTP hydrolase that promotes the GTP-dependent binding of aminoacyl-tRNA to the A-site of ribosomes during protein biosynthesis. This Yersinia pseudotuberculosis serotype O:1b (strain IP 31758) protein is Elongation factor Tu 2.